Here is a 55-residue protein sequence, read N- to C-terminus: uncharacterized protein (55 aa).

The disordered stretch occupies residues 1 to 25 (MKNNDKKKEVQRKYREEIKKKKQKN). The chain crosses the membrane as a helical span at residues 35-55 (TIIVVTIIVLFIFFTYTLQGF).

The protein localises to the membrane. This is an uncharacterized protein from Bacillus subtilis (strain 168).